Consider the following 295-residue polypeptide: 3-hydroxy-5-phosphonooxypentane-2,4-dione thiolase (295 aa).

The active-site Schiff-base intermediate with substrate is lysine 203.

This sequence belongs to the DeoC/FbaB aldolase family. As to quaternary structure, homodecamer.

It localises to the cytoplasm. It catalyses the reaction dihydroxyacetone phosphate + acetyl-CoA = 3-hydroxy-2,4-dioxopentyl phosphate + CoA. Functionally, involved in the degradation of phospho-AI-2, thereby terminating induction of the lsr operon and closing the AI-2 signaling cycle. Catalyzes the transfer of an acetyl moiety from 3-hydroxy-5-phosphonooxypentane-2,4-dione to CoA to form glycerone phosphate and acetyl-CoA. The polypeptide is 3-hydroxy-5-phosphonooxypentane-2,4-dione thiolase (Klebsiella pneumoniae subsp. pneumoniae (strain ATCC 700721 / MGH 78578)).